We begin with the raw amino-acid sequence, 80 residues long: Large ribosomal subunit protein bL28 (80 aa).

Residues 1–21 form a disordered region; that stretch reads MSRICQITRKKSMKGNSVAHS.

Belongs to the bacterial ribosomal protein bL28 family.

The polypeptide is Large ribosomal subunit protein bL28 (Azobacteroides pseudotrichonymphae genomovar. CFP2).